We begin with the raw amino-acid sequence, 453 residues long: Bifunctional protein GlmU (453 aa).

The pyrophosphorylase stretch occupies residues 1-225 (MNIVILAAGT…EWETLGVNSK (225 aa)). UDP-N-acetyl-alpha-D-glucosamine-binding positions include 6–9 (LAAG), K20, Q71, 76–77 (GT), 98–100 (YGD), G135, E150, N165, and N223. D100 contacts Mg(2+). N223 is a binding site for Mg(2+). The interval 226-246 (AQLAELERIHQRNIAEALLVD) is linker. An N-acetyltransferase region spans residues 247–453 (GVTLADPARL…GYVRPVKKKS (207 aa)). UDP-N-acetyl-alpha-D-glucosamine contacts are provided by R329 and K347. The active-site Proton acceptor is the H359. Y362 and N373 together coordinate UDP-N-acetyl-alpha-D-glucosamine. Acetyl-CoA is bound by residues A376, 382-383 (NY), S401, and A419.

The protein in the N-terminal section; belongs to the N-acetylglucosamine-1-phosphate uridyltransferase family. In the C-terminal section; belongs to the transferase hexapeptide repeat family. As to quaternary structure, homotrimer. Mg(2+) serves as cofactor.

It is found in the cytoplasm. It carries out the reaction alpha-D-glucosamine 1-phosphate + acetyl-CoA = N-acetyl-alpha-D-glucosamine 1-phosphate + CoA + H(+). The catalysed reaction is N-acetyl-alpha-D-glucosamine 1-phosphate + UTP + H(+) = UDP-N-acetyl-alpha-D-glucosamine + diphosphate. It participates in nucleotide-sugar biosynthesis; UDP-N-acetyl-alpha-D-glucosamine biosynthesis; N-acetyl-alpha-D-glucosamine 1-phosphate from alpha-D-glucosamine 6-phosphate (route II): step 2/2. Its pathway is nucleotide-sugar biosynthesis; UDP-N-acetyl-alpha-D-glucosamine biosynthesis; UDP-N-acetyl-alpha-D-glucosamine from N-acetyl-alpha-D-glucosamine 1-phosphate: step 1/1. It functions in the pathway bacterial outer membrane biogenesis; LPS lipid A biosynthesis. Its function is as follows. Catalyzes the last two sequential reactions in the de novo biosynthetic pathway for UDP-N-acetylglucosamine (UDP-GlcNAc). The C-terminal domain catalyzes the transfer of acetyl group from acetyl coenzyme A to glucosamine-1-phosphate (GlcN-1-P) to produce N-acetylglucosamine-1-phosphate (GlcNAc-1-P), which is converted into UDP-GlcNAc by the transfer of uridine 5-monophosphate (from uridine 5-triphosphate), a reaction catalyzed by the N-terminal domain. The protein is Bifunctional protein GlmU of Burkholderia lata (strain ATCC 17760 / DSM 23089 / LMG 22485 / NCIMB 9086 / R18194 / 383).